The sequence spans 448 residues: Asparagine--tRNA ligase (448 aa).

The protein belongs to the class-II aminoacyl-tRNA synthetase family. In terms of assembly, homodimer.

Its subcellular location is the cytoplasm. The enzyme catalyses tRNA(Asn) + L-asparagine + ATP = L-asparaginyl-tRNA(Asn) + AMP + diphosphate + H(+). This chain is Asparagine--tRNA ligase, found in Streptococcus thermophilus (strain ATCC BAA-250 / LMG 18311).